The sequence spans 60 residues: Cytotoxin 5 (60 aa).

Intrachain disulfides connect Cys3-Cys21, Cys14-Cys38, Cys42-Cys53, and Cys54-Cys59.

The protein belongs to the three-finger toxin family. Short-chain subfamily. Type IA cytotoxin sub-subfamily. Monomer in solution; Homodimer and oligomer in the presence of negatively charged lipids forming a pore with a size ranging between 20 and 30 Angstroms. In terms of tissue distribution, expressed by the venom gland.

Its subcellular location is the secreted. It is found in the target cell membrane. Its function is as follows. Shows cytolytic activity on many different cells by forming pore in lipid membranes. In vivo, increases heart rate or kills the animal by cardiac arrest. In addition, it binds to heparin with high affinity, interacts with Kv channel-interacting protein 1 (KCNIP1) in a calcium-independent manner, and binds to integrin alpha-V/beta-3 (ITGAV/ITGB3) with moderate affinity. This is Cytotoxin 5 from Naja annulifera (Banded Egyptian cobra).